Reading from the N-terminus, the 674-residue chain is Probable protein phosphatase 2C 66 (674 aa).

Ser-125 is subject to Phosphoserine. Disordered regions lie at residues 153 to 175 (YSGP…RKKP) and 202 to 247 (KSVI…KQSM). The PPM-type phosphatase domain occupies 244–665 (KQSMNSVLDV…DDVSVIVISL (422 aa)). Positions 282 and 283 each coordinate Mn(2+). The span at 373 to 384 (NNKTKSDNRCDQ) shows a compositional bias: basic and acidic residues. The disordered stretch occupies residues 373 to 392 (NNKTKSDNRCDQKGSNSTTT). Mn(2+) contacts are provided by Asp-593 and Asp-656.

This sequence belongs to the PP2C family. Mg(2+) serves as cofactor. Requires Mn(2+) as cofactor. As to expression, expressed at low level in seedlings, roots, leaves, stems, young inflorescences, flowers and siliques.

The protein resides in the nucleus. The catalysed reaction is O-phospho-L-seryl-[protein] + H2O = L-seryl-[protein] + phosphate. The enzyme catalyses O-phospho-L-threonyl-[protein] + H2O = L-threonyl-[protein] + phosphate. The protein is Probable protein phosphatase 2C 66 (PLL2) of Arabidopsis thaliana (Mouse-ear cress).